Consider the following 829-residue polypeptide: Periplasmic nitrate reductase (829 aa).

The tat-type signal signal peptide spans 1 to 27; it reads MNRRDFMKANAVIAAASAAGLALPAGA. Positions 39–95 constitute a 4Fe-4S Mo/W bis-MGD-type domain; sequence LEWNKAPCRFCGTGCSVMVATREGKVVATHGDANSEVNRGLSCIKGYFLSKIMYGRD. [4Fe-4S] cluster contacts are provided by cysteine 46, cysteine 49, cysteine 53, and cysteine 81. Residues lysine 83, glutamine 150, asparagine 175, cysteine 179, 212–219, 243–247, 262–264, methionine 373, glutamine 377, asparagine 483, 509–510, lysine 532, aspartate 559, and 719–728 each bind Mo-bis(molybdopterin guanine dinucleotide); these read WGSNMAEM, STFEH, QTD, SD, and TGRVLEHWHS. Tryptophan 795 contributes to the substrate binding site. Mo-bis(molybdopterin guanine dinucleotide)-binding residues include asparagine 803 and lysine 820.

This sequence belongs to the prokaryotic molybdopterin-containing oxidoreductase family. NasA/NapA/NarB subfamily. As to quaternary structure, component of the periplasmic nitrate reductase NapAB complex composed of NapA and NapB. Requires [4Fe-4S] cluster as cofactor. Mo-bis(molybdopterin guanine dinucleotide) is required as a cofactor. In terms of processing, predicted to be exported by the Tat system. The position of the signal peptide cleavage has not been experimentally proven.

The protein resides in the periplasm. It catalyses the reaction 2 Fe(II)-[cytochrome] + nitrate + 2 H(+) = 2 Fe(III)-[cytochrome] + nitrite + H2O. In terms of biological role, catalytic subunit of the periplasmic nitrate reductase complex NapAB. Receives electrons from NapB and catalyzes the reduction of nitrate to nitrite. This Shewanella denitrificans (strain OS217 / ATCC BAA-1090 / DSM 15013) protein is Periplasmic nitrate reductase.